Reading from the N-terminus, the 136-residue chain is uncharacterized protein (136 aa).

The helical transmembrane segment at 40–62 (LFYSISLCVSLLLHISLCVSVYV) threads the bilayer.

Its subcellular location is the membrane. This is an uncharacterized protein from Homo sapiens (Human).